The primary structure comprises 162 residues: E3 ubiquitin-protein ligase LAP (162 aa).

Over 1-78 (MEGSDNTNTH…RWKCSFMYCN (78 aa)) the chain is Cytoplasmic. The RING-CH-type zinc finger occupies 3–61 (GSDNTNTHCWICKDEYNVSTNFCNCKNEFKIVHKNCLEEWINFSHNTKCKICNGKYNIK). Zn(2+) is bound by residues cysteine 11, cysteine 14, cysteine 25, cysteine 27, histidine 35, cysteine 38, cysteine 51, and cysteine 54. A helical membrane pass occupies residues 79–99 (VPAICVSLICLLLLPLTILLV). At 100-121 (KFNLKSMLENIENRDLIALISA) the chain is on the lumenal side. The chain crosses the membrane as a helical span at residues 122–142 (MAYSLPCVVGFITVVHILIAL). Residues 143–162 (YDYYLAAKSDNTTYQVYEYI) lie on the Cytoplasmic side of the membrane.

The protein belongs to the poxviridae LAP protein family.

The protein resides in the host membrane. Its subcellular location is the host Golgi apparatus. It localises to the host trans-Golgi network membrane. The protein localises to the host early endosome membrane. It carries out the reaction S-ubiquitinyl-[E2 ubiquitin-conjugating enzyme]-L-cysteine + [acceptor protein]-L-lysine = [E2 ubiquitin-conjugating enzyme]-L-cysteine + N(6)-ubiquitinyl-[acceptor protein]-L-lysine.. Its function is as follows. E3 ubiquitin-protein ligase which promotes ubiquitination and subsequent degradation of host MHC-I and CD4 molecules, presumably to prevent lysis of infected cells by cytotoxic T-lymphocytes and NK cell. Binds target molecules through transmembrane interaction. The result of this ubiquitination is the enhancement of the endocytosis of the target chain and the delivery to the lysosome, where it is proteolytically destroyed. In Lumpy skin disease virus (LSDV), this protein is E3 ubiquitin-protein ligase LAP (LW010).